The primary structure comprises 586 residues: Alanine racemase ungC (586 aa).

Residues arginine 187–proline 206 are disordered. The segment covering serine 196–proline 206 has biased composition (polar residues).

The protein belongs to the trans-sulfuration enzymes family. The cofactor is pyridoxal 5'-phosphate.

It catalyses the reaction L-alanine = D-alanine. Its pathway is secondary metabolite biosynthesis. Its function is as follows. Alanine racemase; part of the gene cluster that mediates the biosynthesis of the unguisins, gamma-aminobutyric acid (GABA)-containing fungal cyclic heptapeptides with the amino acid sequence cyclo-(D-Ala1-D-Val2-L-Phe3-D-Val4-D-Ala5-D-Trp6-GABA7) for unguisin A and cyclo-(D-Ala1-D-Val2-L-Leu3-D-Val4-D-Ala5-D-Trp6-GABA7) for unguisin B. Within the pathway, the alanine racemase ungC catalyzes the interconversion of L-alanine and D-alanine, providing the D-alanine which is accepted by the first adenylation domain of the nonribosomal peptide synthetase (NRPS) ungA. UngA is the main enzyme within the cluster which condenses the 7 residues using its respective 7 modules. The terminal condensation domain (Ct) is involved in cyclization with D-alanine and thereby releasing of unguisins A and B. Finally, the hydrolase ungD catalyzes the hydrolysis between the D-tryptophan and GABA residues of unguisins A and B to produce the corresponding linear peptides. This chain is Alanine racemase ungC, found in Aspergillus violaceofuscus (strain CBS 115571).